A 160-amino-acid chain; its full sequence is Thialysine N-epsilon-acetyltransferase (160 aa).

In terms of domain architecture, N-acetyltransferase spans 4–159 (FEIVTVTPDH…DGAAINKFAD (156 aa)). Acetyl-CoA contacts are provided by residues 84–86 (LYI), 92–97 (RMGLAR), 123–126 (NKNA), and 130–133 (YDTV).

This sequence belongs to the acetyltransferase family. Homodimer.

The catalysed reaction is S-(2-aminoethyl)-L-cysteine + acetyl-CoA = S-(2-acetamidoethyl)-L-cysteine + CoA + H(+). It catalyses the reaction O-(2-aminoethyl)-L-serine + acetyl-CoA = O-(2-acetamidoethyl)-L-serine + CoA + H(+). It carries out the reaction S-(2-aminoethyl)-homocysteine + acetyl-CoA = S-(2-acetamidoethyl)-homocysteine + CoA + H(+). In terms of biological role, catalyzes the N-acetylation of the amino acid thialysine (S-(2-aminoethyl)-L-cysteine), a L-lysine analog with the 4-methylene group substituted with a sulfur. Substrate specificity: thialysine &gt; O-(2-aminoethyl)-L-serine &gt; S-(2-aminoethyl)-D,L-homocysteine. Does not act on polyamines, such as spermidine and spermine, nor on diamines putrescine and cadaverine. The protein is Thialysine N-epsilon-acetyltransferase of Caenorhabditis elegans.